Here is a 292-residue protein sequence, read N- to C-terminus: Phosphatidylserine decarboxylase proenzyme (292 aa).

Active-site charge relay system; for autoendoproteolytic cleavage activity residues include D89, H146, and S252. The Schiff-base intermediate with substrate; via pyruvic acid; for decarboxylase activity role is filled by S252. S252 is subject to Pyruvic acid (Ser); by autocatalysis.

This sequence belongs to the phosphatidylserine decarboxylase family. PSD-B subfamily. Prokaryotic type I sub-subfamily. Heterodimer of a large membrane-associated beta subunit and a small pyruvoyl-containing alpha subunit. It depends on pyruvate as a cofactor. Post-translationally, is synthesized initially as an inactive proenzyme. Formation of the active enzyme involves a self-maturation process in which the active site pyruvoyl group is generated from an internal serine residue via an autocatalytic post-translational modification. Two non-identical subunits are generated from the proenzyme in this reaction, and the pyruvate is formed at the N-terminus of the alpha chain, which is derived from the carboxyl end of the proenzyme. The autoendoproteolytic cleavage occurs by a canonical serine protease mechanism, in which the side chain hydroxyl group of the serine supplies its oxygen atom to form the C-terminus of the beta chain, while the remainder of the serine residue undergoes an oxidative deamination to produce ammonia and the pyruvoyl prosthetic group on the alpha chain. During this reaction, the Ser that is part of the protease active site of the proenzyme becomes the pyruvoyl prosthetic group, which constitutes an essential element of the active site of the mature decarboxylase.

It localises to the cell membrane. The enzyme catalyses a 1,2-diacyl-sn-glycero-3-phospho-L-serine + H(+) = a 1,2-diacyl-sn-glycero-3-phosphoethanolamine + CO2. Its pathway is phospholipid metabolism; phosphatidylethanolamine biosynthesis; phosphatidylethanolamine from CDP-diacylglycerol: step 2/2. In terms of biological role, catalyzes the formation of phosphatidylethanolamine (PtdEtn) from phosphatidylserine (PtdSer). This chain is Phosphatidylserine decarboxylase proenzyme, found in Shewanella sp. (strain MR-4).